The chain runs to 79 residues: MKVTGIFLLSALALLSLSGNTGADSLGREAKCYNELNGCTKIYDPVCGTDGNTYPNECVLCFENRKRQTSILIQKSGPC.

An N-terminal signal peptide occupies residues 1–23 (MKVTGIFLLSALALLSLSGNTGA). The Kazal-like domain maps to 26 to 79 (LGREAKCYNELNGCTKIYDPVCGTDGNTYPNECVLCFENRKRQTSILIQKSGPC). 3 disulfide bridges follow: Cys-32–Cys-61, Cys-39–Cys-58, and Cys-47–Cys-79.

The protein resides in the secreted. Functionally, serine protease inhibitor which exhibits anti-trypsin activity. In the pancreas, protects against trypsin-catalyzed premature activation of zymogens. Its function is as follows. In the male reproductive tract, binds to sperm heads where it modulates sperm capacitance by inhibiting calcium uptake and nitrogen oxide (NO) production. The sequence is that of Serine protease inhibitor Kazal-type 1 (SPINK1) from Homo sapiens (Human).